Here is a 312-residue protein sequence, read N- to C-terminus: Secreted RxLR effector protein 14 (312 aa).

The N-terminal stretch at Met1–Ala20 is a signal peptide. Residues Arg46–Arg61 carry the RxLR-dEER motif.

Belongs to the RxLR effector family.

Its subcellular location is the secreted. The protein resides in the host nucleus. Its function is as follows. Secreted effector that completely suppresses the host cell death induced by cell death-inducing proteins. The polypeptide is Secreted RxLR effector protein 14 (Plasmopara viticola (Downy mildew of grapevine)).